We begin with the raw amino-acid sequence, 513 residues long: ATP synthase subunit alpha (513 aa).

169–176 (GDRQTGKT) serves as a coordination point for ATP.

This sequence belongs to the ATPase alpha/beta chains family. F-type ATPases have 2 components, CF(1) - the catalytic core - and CF(0) - the membrane proton channel. CF(1) has five subunits: alpha(3), beta(3), gamma(1), delta(1), epsilon(1). CF(0) has three main subunits: a(1), b(2) and c(9-12). The alpha and beta chains form an alternating ring which encloses part of the gamma chain. CF(1) is attached to CF(0) by a central stalk formed by the gamma and epsilon chains, while a peripheral stalk is formed by the delta and b chains.

The protein localises to the cell inner membrane. The enzyme catalyses ATP + H2O + 4 H(+)(in) = ADP + phosphate + 5 H(+)(out). Functionally, produces ATP from ADP in the presence of a proton gradient across the membrane. The alpha chain is a regulatory subunit. This chain is ATP synthase subunit alpha, found in Nitrosomonas europaea (strain ATCC 19718 / CIP 103999 / KCTC 2705 / NBRC 14298).